We begin with the raw amino-acid sequence, 283 residues long: Pantothenate synthetase (283 aa).

30-37 (MGYLHEGH) contributes to the ATP binding site. The Proton donor role is filled by His37. (R)-pantoate is bound at residue Gln61. Beta-alanine is bound at residue Gln61. Residue 147 to 150 (GQKD) participates in ATP binding. Gln153 is a (R)-pantoate binding site. Residues Val176 and 184 to 187 (MSSR) contribute to the ATP site.

Belongs to the pantothenate synthetase family. As to quaternary structure, homodimer.

The protein resides in the cytoplasm. The enzyme catalyses (R)-pantoate + beta-alanine + ATP = (R)-pantothenate + AMP + diphosphate + H(+). It functions in the pathway cofactor biosynthesis; (R)-pantothenate biosynthesis; (R)-pantothenate from (R)-pantoate and beta-alanine: step 1/1. Functionally, catalyzes the condensation of pantoate with beta-alanine in an ATP-dependent reaction via a pantoyl-adenylate intermediate. In Thermoanaerobacter pseudethanolicus (strain ATCC 33223 / 39E) (Clostridium thermohydrosulfuricum), this protein is Pantothenate synthetase.